The primary structure comprises 196 residues: Peroxisome assembly protein 22 (196 aa).

Residues 15 to 37 (LWIAALVAASIVTISYKVYSSYI) form a helical membrane-spanning segment.

It belongs to the peroxin-22 family.

It is found in the peroxisome membrane. Functionally, involved in peroxisome biogenesis. This is Peroxisome assembly protein 22 (PEX22) from Debaryomyces hansenii (strain ATCC 36239 / CBS 767 / BCRC 21394 / JCM 1990 / NBRC 0083 / IGC 2968) (Yeast).